Consider the following 675-residue polypeptide: Methionine--tRNA ligase (675 aa).

Residues 15 to 25 (PYANGSIHLGH) carry the 'HIGH' region motif. The Zn(2+) site is built by Cys-146, Cys-149, Cys-159, and Cys-162. The short motif at 332–336 (KMSKS) is the 'KMSKS' region element. Lys-335 lines the ATP pocket. The tRNA-binding domain maps to 573 to 675 (DFAKVDMRIA…SGAQPGMQVK (103 aa)).

Belongs to the class-I aminoacyl-tRNA synthetase family. MetG type 1 subfamily. In terms of assembly, homodimer. Zn(2+) is required as a cofactor.

Its subcellular location is the cytoplasm. It catalyses the reaction tRNA(Met) + L-methionine + ATP = L-methionyl-tRNA(Met) + AMP + diphosphate. In terms of biological role, is required not only for elongation of protein synthesis but also for the initiation of all mRNA translation through initiator tRNA(fMet) aminoacylation. The chain is Methionine--tRNA ligase from Yersinia pseudotuberculosis serotype O:3 (strain YPIII).